Consider the following 227-residue polypeptide: Phosphoribosylformylglycinamidine synthase subunit PurQ (227 aa).

Residues 3-225 (FAVIVFPGSN…LRNWRESHVV (223 aa)) enclose the Glutamine amidotransferase type-1 domain. The active-site Nucleophile is cysteine 86. Active-site residues include histidine 194 and glutamate 196.

Part of the FGAM synthase complex composed of 1 PurL, 1 PurQ and 2 PurS subunits.

Its subcellular location is the cytoplasm. It catalyses the reaction N(2)-formyl-N(1)-(5-phospho-beta-D-ribosyl)glycinamide + L-glutamine + ATP + H2O = 2-formamido-N(1)-(5-O-phospho-beta-D-ribosyl)acetamidine + L-glutamate + ADP + phosphate + H(+). The enzyme catalyses L-glutamine + H2O = L-glutamate + NH4(+). It functions in the pathway purine metabolism; IMP biosynthesis via de novo pathway; 5-amino-1-(5-phospho-D-ribosyl)imidazole from N(2)-formyl-N(1)-(5-phospho-D-ribosyl)glycinamide: step 1/2. In terms of biological role, part of the phosphoribosylformylglycinamidine synthase complex involved in the purines biosynthetic pathway. Catalyzes the ATP-dependent conversion of formylglycinamide ribonucleotide (FGAR) and glutamine to yield formylglycinamidine ribonucleotide (FGAM) and glutamate. The FGAM synthase complex is composed of three subunits. PurQ produces an ammonia molecule by converting glutamine to glutamate. PurL transfers the ammonia molecule to FGAR to form FGAM in an ATP-dependent manner. PurS interacts with PurQ and PurL and is thought to assist in the transfer of the ammonia molecule from PurQ to PurL. In Halalkalibacterium halodurans (strain ATCC BAA-125 / DSM 18197 / FERM 7344 / JCM 9153 / C-125) (Bacillus halodurans), this protein is Phosphoribosylformylglycinamidine synthase subunit PurQ.